The primary structure comprises 104 residues: DNA-binding transcriptional repressor TubR (104 aa).

2 consecutive DNA-binding regions (HTH) follow at residues 43-50 (KTAVAEMI) and 54-65 (KPTVFATVNSFY).

In terms of assembly, homodimer. Binds to tubC DNA, the TubR-DNA complex binds to TubZ.

In terms of biological role, a DNA-binding protein that is part of the type III plasmid partition system used to ensure correct segregation of the pBtoxis plasmid. Cooperatively binds to the centromere-like site (tubC), which may seed filament formation by the TubZ polymerizing GTPase, stabilizing TubZ filaments. TubR-tubC complexes track the depolymerizing minus end of the filament, probably pulling plasmid within the cell. Required for plasmid replication. Negatively regulates levels of TubZ; its effect on RNA expression has not been shown. Specifically binds iterons, 12-bp imperfect direct repeats that function as a plasmid origin of replication. Four TubR dimers bind to tubC, forming an extended bent DNA-protein filament with protein wrapping helically around the outside of the DNA. The polypeptide is DNA-binding transcriptional repressor TubR (Bacillus thuringiensis subsp. israelensis).